The following is a 438-amino-acid chain: Shikimate transporter (438 aa).

12 consecutive transmembrane segments (helical) span residues 28–48 (FAGAVVDWYDFLLYGITAALV), 64–84 (LAAFATFGVGFLFRPLGGVIF), 109–129 (ALIGILPSFSTIGWWAPILLV), 133–153 (AIQGFAVGGEWGGAALLSVES), 168–188 (VGYGVGLLLSTGLVSLISMMT), 193–213 (FLSWGWRIPFLFSIVLVLGAL), 255–275 (IIALRLCELLTMYIVTAFALN), 287–307 (LFLNIGLLVGGLSCLTIPCFA), 318–337 (VYITGTLIGTLSAFPFFMAL), 341–363 (SIFWIVFFSIMLANIAHDMVVCV), 387–407 (VASVVGGGFTPFIAAALITYF), and 411–431 (WHSVAIYLLAGCLISAMTALL).

Belongs to the major facilitator superfamily. Metabolite:H+ Symporter (MHS) family (TC 2.A.1.6) family.

The protein resides in the cell inner membrane. The enzyme catalyses shikimate(in) + H(+)(in) = shikimate(out) + H(+)(out). In terms of biological role, involved in the uptake of shikimate, an intermediate in the aromatic amino acid biosynthetic pathway. The polypeptide is Shikimate transporter (Escherichia coli (strain K12)).